The sequence spans 150 residues: Peptide deformylase (150 aa).

Positions 88 and 130 each coordinate Fe cation. Residue E131 is part of the active site. H134 is a binding site for Fe cation.

Belongs to the polypeptide deformylase family. Requires Fe(2+) as cofactor.

The enzyme catalyses N-terminal N-formyl-L-methionyl-[peptide] + H2O = N-terminal L-methionyl-[peptide] + formate. In terms of biological role, removes the formyl group from the N-terminal Met of newly synthesized proteins. Requires at least a dipeptide for an efficient rate of reaction. N-terminal L-methionine is a prerequisite for activity but the enzyme has broad specificity at other positions. This Desulfitobacterium hafniense (strain Y51) protein is Peptide deformylase.